The chain runs to 286 residues: Energy-coupling factor transporter ATP-binding protein EcfA2 (286 aa).

An ABC transporter domain is found at 3-244 (IKVENVSFIY…AERLEKIGLS (242 aa)). 40 to 47 (GHTGSGKS) provides a ligand contact to ATP.

This sequence belongs to the ABC transporter superfamily. Energy-coupling factor EcfA family. In terms of assembly, forms a stable energy-coupling factor (ECF) transporter complex composed of 2 membrane-embedded substrate-binding proteins (S component), 2 ATP-binding proteins (A component) and 2 transmembrane proteins (T component).

Its subcellular location is the cell membrane. In terms of biological role, ATP-binding (A) component of a common energy-coupling factor (ECF) ABC-transporter complex. Unlike classic ABC transporters this ECF transporter provides the energy necessary to transport a number of different substrates. This chain is Energy-coupling factor transporter ATP-binding protein EcfA2, found in Caldanaerobacter subterraneus subsp. tengcongensis (strain DSM 15242 / JCM 11007 / NBRC 100824 / MB4) (Thermoanaerobacter tengcongensis).